The following is an 89-amino-acid chain: 10 kDa fusion protein (89 aa).

The interval 1-29 (MDENDGENLLTQPDDTGNSTNGVYAAGAP) is disordered. Over residues 9 to 22 (LLTQPDDTGNSTNG) the composition is skewed to polar residues. A glycan (N-linked (GlcNAc...) asparagine; by host) is linked at asparagine 18.

It belongs to the poxviruses fusion protein family. As to quaternary structure, homotrimer, covalently linked.

Its subcellular location is the virion membrane. This Capra hircus (Goat) protein is 10 kDa fusion protein.